A 445-amino-acid chain; its full sequence is Ribosomal protein uS12 methylthiotransferase RimO (445 aa).

Positions 4-119 (IKVALVSLGC…LLESIKVFLK (116 aa)) constitute an MTTase N-terminal domain. Positions 13, 48, 82, 156, 160, and 163 each coordinate [4Fe-4S] cluster. Residues 142–372 (TTPTYTAYVR…MILQQSISKD (231 aa)) form the Radical SAM core domain. Residues 375–441 (KEKIGKTYEV…EYDLIGVVYN (67 aa)) form the TRAM domain.

It belongs to the methylthiotransferase family. RimO subfamily. [4Fe-4S] cluster is required as a cofactor.

It is found in the cytoplasm. The catalysed reaction is L-aspartate(89)-[ribosomal protein uS12]-hydrogen + (sulfur carrier)-SH + AH2 + 2 S-adenosyl-L-methionine = 3-methylsulfanyl-L-aspartate(89)-[ribosomal protein uS12]-hydrogen + (sulfur carrier)-H + 5'-deoxyadenosine + L-methionine + A + S-adenosyl-L-homocysteine + 2 H(+). In terms of biological role, catalyzes the methylthiolation of an aspartic acid residue of ribosomal protein uS12. The polypeptide is Ribosomal protein uS12 methylthiotransferase RimO (Clostridium botulinum (strain ATCC 19397 / Type A)).